Consider the following 111-residue polypeptide: Small ribosomal subunit protein mS38 (111 aa).

The span at 82–99 (RKRKKKMKKHKLRKRRKR) shows a compositional bias: basic residues. Residues 82 to 111 (RKRKKKMKKHKLRKRRKREKAERRKLSQGR) form a disordered region. A compositionally biased stretch (basic and acidic residues) spans 100 to 111 (EKAERRKLSQGR).

This sequence belongs to the mitochondrion-specific ribosomal protein mS38 family. Component of the mitochondrial small ribosomal subunit (mt-SSU). Mature yeast 74S mitochondrial ribosomes consist of a small (37S) and a large (54S) subunit. The 37S small subunit contains a 15S ribosomal RNA (15S mt-rRNA) and 34 different proteins. The 54S large subunit contains a 21S rRNA (21S mt-rRNA) and 46 different proteins.

The protein localises to the mitochondrion. Its subcellular location is the mitochondrion inner membrane. Component of the mitochondrial ribosome (mitoribosome), a dedicated translation machinery responsible for the synthesis of mitochondrial genome-encoded proteins, including at least some of the essential transmembrane subunits of the mitochondrial respiratory chain. The mitoribosomes are attached to the mitochondrial inner membrane and translation products are cotranslationally integrated into the membrane. mS38 is also involved in the splicing of the COX1 mRNA. The chain is Small ribosomal subunit protein mS38 (QRI5) from Saccharomyces cerevisiae (strain ATCC 204508 / S288c) (Baker's yeast).